We begin with the raw amino-acid sequence, 231 residues long: Sporulation protein RMD6 (231 aa).

The protein resides in the peroxisome. Required for sporulation. Required for meiotic nuclear division. In Saccharomyces cerevisiae (strain ATCC 204508 / S288c) (Baker's yeast), this protein is Sporulation protein RMD6 (RMD6).